The primary structure comprises 69 residues: Conotoxin Eb6.19 (69 aa).

An N-terminal signal peptide occupies residues 1–17; the sequence is VLIIAVLFLTACQLTTA. Residues 18–41 constitute a propeptide that is removed on maturation; it reads ETYSRGRQKHRARRSTDKNSKWTR. 3 disulfide bridges follow: C43–C57, C50–C61, and C56–C68.

This sequence belongs to the conotoxin O1 superfamily. Expressed by the venom duct.

Its subcellular location is the secreted. This is Conotoxin Eb6.19 (E1) from Conus ebraeus (Hebrew cone).